A 683-amino-acid chain; its full sequence is Rhophilin-2-B (683 aa).

One can recognise an REM-1 domain in the interval K25–V99. Residues P110–L501 enclose the BRO1 domain. In terms of domain architecture, PDZ spans K515–I592.

The protein belongs to the RHPN family. In terms of assembly, interacts with RhoA.

It is found in the cytoplasm. The protein localises to the perinuclear region. Its function is as follows. Binds specifically to GTP-Rho. This chain is Rhophilin-2-B (rhpn2-b), found in Xenopus laevis (African clawed frog).